Reading from the N-terminus, the 509-residue chain is MTISPIPGLLFVYDQPPHSIYVLPFVISAAALCYFIGLIVFNLWFHPLARFPGPLLARSTLLWRMRMTLKGRIHRSIEAGHQKYGPVLRVAPNELSFASVSSWKSIYGHRPGGMIPTKSEFYDMYGSGFNSLCIGSERDPEKHRQMKSFLSAAFSTKALLEQEPLVSQTVDAFITRLGNDGGSETKGLDMTKWTEMVAFDILGEMAFGQSFECIIRGEPHYWQEMILKHLYFITVADNLRRLPFALTLARFLAPVLTAVRNKHSQFTRDKVAERMTNKNLRKDFMSNLISKVESGEVDREEMTAHASTLIIAGGETVATFLAATVYYLLKTPEVYKAMREEIRNRFPTYESINATSAQQLPYLQAVINEGLRIYPPGSQGFPRLSPGLAIDGEWIPEGTEIYTSAWTVTHNPQMFKDPMKFDPNRWLNEKSTDIKESSQPFSLGPRGCLGRNFALMELNLILSKLCWKYDMELMDQSLDWEGQSKVHVMWDKPALTVRFHSVDGSTLKA.

2 helical membrane passes run 20–40 and 309–329; these read IYVL…GLIV and LIIA…YYLL. N-linked (GlcNAc...) asparagine glycosylation occurs at asparagine 353. Position 448 (cysteine 448) interacts with heme.

Belongs to the cytochrome P450 family. Heme is required as a cofactor.

The protein localises to the membrane. The protein operates within sesquiterpene biosynthesis. Cytochrome P450 monooxygenase; part of the gene cluster that mediates the biosynthesis of PR-toxin, a bicyclic sesquiterpene belonging to the eremophilane class and acting as a mycotoxin. The first step of the pathway is catalyzed by the aristolochene synthase which performs the cyclization of trans,trans-farnesyl diphosphate (FPP) to the bicyclic sesquiterpene aristolochene. Following the formation of aristolochene, the non-oxygenated aristolochene is converted to the trioxygenated intermediate eremofortin B, via 7-epi-neopetasone. This conversion appears to involve three enzymes, a hydroxysterol oxidase-like enzyme, the quinone-oxidase prx3 that forms the quinone-type-structure in the bicyclic nucleus of aristolochene with the C8-oxo group and the C-3 hydroxyl group, and the P450 monooxygenase ORF6 that introduces the epoxide at the double bond between carbons 1 and 2. No monoxy or dioxy-intermediates have been reported to be released to the broth, so these three early oxidative reactions may be coupled together. Eremofortin B is further oxidized by another P450 monooxygenase, that introduces a second epoxide between carbons 7 and 11 prior to acetylation to eremofortin A by the acetyltransferase ORF8. The second epoxidation may be performed by a second P450 monooxygenase. After the acetylation step, eremofortin A is converted to eremofortin C and then to PR-toxin. First the conversion of eremofortin A to eremofortin C proceeds by oxidation of the side chain of the molecule at C-12 and is catalyzed by the short-chain oxidoreductase prx1. The cytochrome P450 monooxygenase ORF6 is probably also involved in this step. The primary alcohol formed at C-12 is finally oxidized by the short-chain alcohol dehydrogenase prx4 that forms PR-toxin. The sequence is that of Cytochrome P450 monooxygenase ORF9 from Penicillium roqueforti (strain FM164).